The following is a 258-amino-acid chain: Lysine-rich coiled-coil protein 1 (258 aa).

A disordered region spans residues 142–258; that stretch reads DNSTSTHQAS…MLWDQSILGF (117 aa). The segment covering 150 to 161 has biased composition (basic residues); the sequence is ASHKQIHQKRKR. Composition is skewed to basic and acidic residues over residues 162-175, 183-213, and 220-232; these read HPEE…EEWS, CKEI…TEKL, and KGRD…EERK. Residues 211 to 248 adopt a coiled-coil conformation; it reads EKLKNRKEKKGRDVVSKKEERKRTKKKKEQGQERTEEE.

This Pongo abelii (Sumatran orangutan) protein is Lysine-rich coiled-coil protein 1 (KRCC1).